Consider the following 189-residue polypeptide: Peptidyl-tRNA hydrolase (189 aa).

Tyr-14 serves as a coordination point for tRNA. The active-site Proton acceptor is His-19. TRNA-binding residues include Tyr-64, Asn-66, and Asn-112.

It belongs to the PTH family. In terms of assembly, monomer.

The protein localises to the cytoplasm. The enzyme catalyses an N-acyl-L-alpha-aminoacyl-tRNA + H2O = an N-acyl-L-amino acid + a tRNA + H(+). Functionally, hydrolyzes ribosome-free peptidyl-tRNAs (with 1 or more amino acids incorporated), which drop off the ribosome during protein synthesis, or as a result of ribosome stalling. In terms of biological role, catalyzes the release of premature peptidyl moieties from peptidyl-tRNA molecules trapped in stalled 50S ribosomal subunits, and thus maintains levels of free tRNAs and 50S ribosomes. The chain is Peptidyl-tRNA hydrolase from Clostridium botulinum (strain 657 / Type Ba4).